The sequence spans 425 residues: Cell adhesion molecule CEACAM16 (425 aa).

A signal peptide spans 1–20 (MALTGYSWLLLSATFLNVGA). Asn-36 carries an N-linked (GlcNAc...) asparagine glycan. 2 Ig-like C2-type domains span residues 133–218 (PTVL…INLT) and 223–309 (PERV…ASVV). Cys-153 and Cys-201 are disulfide-bonded. An N-linked (GlcNAc...) asparagine glycan is attached at Asn-216. A disulfide bridge connects residues Cys-252 and Cys-293. N-linked (GlcNAc...) asparagine glycosylation occurs at Asn-394.

Belongs to the immunoglobulin superfamily. CEA family. In terms of assembly, homooligomer; can for homodimers and homotetramers. Interacts with TECTA and TECTB.

The protein localises to the secreted. Required for proper hearing, plays a role in maintaining the integrity of the tectorial membrane. This Homo sapiens (Human) protein is Cell adhesion molecule CEACAM16.